A 345-amino-acid polypeptide reads, in one-letter code: Uroporphyrinogen decarboxylase (345 aa).

Residues 27 to 31 (RQAGR), phenylalanine 46, aspartate 76, tyrosine 152, serine 207, and histidine 320 contribute to the substrate site.

This sequence belongs to the uroporphyrinogen decarboxylase family. In terms of assembly, homodimer.

The protein resides in the cytoplasm. It catalyses the reaction uroporphyrinogen III + 4 H(+) = coproporphyrinogen III + 4 CO2. Its pathway is porphyrin-containing compound metabolism; protoporphyrin-IX biosynthesis; coproporphyrinogen-III from 5-aminolevulinate: step 4/4. In terms of biological role, catalyzes the decarboxylation of four acetate groups of uroporphyrinogen-III to yield coproporphyrinogen-III. In Geobacillus thermodenitrificans (strain NG80-2), this protein is Uroporphyrinogen decarboxylase.